The primary structure comprises 110 residues: MAEDELAEIRRRKMAEMQQHAAMQQQDMERQQQYEAQMQMALMQILEPEARERLNTIKLTKPDFARAVEQQLVMLAQSGRIKNKISDDQLKVILQQVTPAKREFNIRRKG.

The protein belongs to the PDCD5 family.

This Methanospirillum hungatei JF-1 (strain ATCC 27890 / DSM 864 / NBRC 100397 / JF-1) protein is DNA-binding protein Mhun_3016.